The following is a 337-amino-acid chain: Beta-hexosaminidase (337 aa).

Residues Asp-62, Arg-70, Arg-133, and 163 to 164 (KH) contribute to the substrate site. The Proton donor/acceptor role is filled by His-176. Asp-248 acts as the Nucleophile in catalysis.

This sequence belongs to the glycosyl hydrolase 3 family. NagZ subfamily.

Its subcellular location is the cytoplasm. The enzyme catalyses Hydrolysis of terminal non-reducing N-acetyl-D-hexosamine residues in N-acetyl-beta-D-hexosaminides.. The protein operates within cell wall biogenesis; peptidoglycan recycling. In terms of biological role, plays a role in peptidoglycan recycling by cleaving the terminal beta-1,4-linked N-acetylglucosamine (GlcNAc) from peptide-linked peptidoglycan fragments, giving rise to free GlcNAc, anhydro-N-acetylmuramic acid and anhydro-N-acetylmuramic acid-linked peptides. The protein is Beta-hexosaminidase of Psychromonas ingrahamii (strain DSM 17664 / CCUG 51855 / 37).